Consider the following 402-residue polypeptide: Arginine biosynthesis bifunctional protein ArgJ (402 aa).

Substrate is bound by residues T152, K178, T189, E275, N397, and T402. Catalysis depends on T189, which acts as the Nucleophile.

The protein belongs to the ArgJ family. Heterotetramer of two alpha and two beta chains.

The protein resides in the cytoplasm. It catalyses the reaction N(2)-acetyl-L-ornithine + L-glutamate = N-acetyl-L-glutamate + L-ornithine. The enzyme catalyses L-glutamate + acetyl-CoA = N-acetyl-L-glutamate + CoA + H(+). Its pathway is amino-acid biosynthesis; L-arginine biosynthesis; L-ornithine and N-acetyl-L-glutamate from L-glutamate and N(2)-acetyl-L-ornithine (cyclic): step 1/1. It functions in the pathway amino-acid biosynthesis; L-arginine biosynthesis; N(2)-acetyl-L-ornithine from L-glutamate: step 1/4. Functionally, catalyzes two activities which are involved in the cyclic version of arginine biosynthesis: the synthesis of N-acetylglutamate from glutamate and acetyl-CoA as the acetyl donor, and of ornithine by transacetylation between N(2)-acetylornithine and glutamate. This chain is Arginine biosynthesis bifunctional protein ArgJ, found in Lactiplantibacillus plantarum (strain ATCC BAA-793 / NCIMB 8826 / WCFS1) (Lactobacillus plantarum).